The primary structure comprises 227 residues: UPF0173 metal-dependent hydrolase BCG9842_B0515 (227 aa).

This sequence belongs to the UPF0173 family.

This is UPF0173 metal-dependent hydrolase BCG9842_B0515 from Bacillus cereus (strain G9842).